The sequence spans 462 residues: MKIPVSGISALNRSLLQIKGPDATKFLNGLSTSRFLPNIVKKKQHTIDEAENRHAKLSEIININDNWGLMHEDIYDPDNNIFVRRDGLNSMFLSSKGRVVTDCFLYSQPFHNLNGTFEGQISEPTYLIEIDSSFTSQLQMLLKLHKLSAKVSIETIKSMHSYYYYNDTAEFDEYLDFIQQEFFRSRDPVDALNNANSFIKSEVLFNPKLAGNILGFSIDNRIPNFGIKVLMDKEIGDDDNKIPVDDLFSSSFKDNFVVPEILKPESITRRRFMNGLFETQDSPKESSLLPFEMNLDLTNGLSLEKGCYVGQELTIRTYNNGIIRKRIVPIQFFEINDDNLSALDESEYLTLDPNDPVIRELQDLHSSTLSKLEITPLIEKKDSPPPEPEQQSSSPFANSKPVRRRTASSGKLLSIQDNLGFVLANLSDIENVDLYKIELPCLEGGVKHVGIKVFKPEWWPID.

The transit peptide at 1 to 43 (MKIPVSGISALNRSLLQIKGPDATKFLNGLSTSRFLPNIVKKK) directs the protein to the mitochondrion. Residues 378–402 (IEKKDSPPPEPEQQSSSPFANSKPV) are disordered.

Belongs to the GcvT family. CAF17/IBA57 subfamily.

The protein resides in the mitochondrion matrix. The chain is Iron-sulfur cluster assembly factor IBA57 homolog, mitochondrial (CAF17) from Debaryomyces hansenii (strain ATCC 36239 / CBS 767 / BCRC 21394 / JCM 1990 / NBRC 0083 / IGC 2968) (Yeast).